Reading from the N-terminus, the 404-residue chain is Metacaspase-1 (404 aa).

Residues 1 to 97 (MHHHHQQPSY…NPQAFGHGAP (97 aa)) are disordered. Residues His195 and Cys251 contribute to the active site.

It belongs to the peptidase C14B family.

In terms of biological role, involved in cell death (apoptosis). The chain is Metacaspase-1 (casA) from Emericella nidulans (strain FGSC A4 / ATCC 38163 / CBS 112.46 / NRRL 194 / M139) (Aspergillus nidulans).